A 108-amino-acid polypeptide reads, in one-letter code: Small proline-rich protein 5 (108 aa).

The span at 1-13 shows a compositional bias: low complexity; it reads MSQQKQKQCAPPQ. Disordered regions lie at residues 1–24 and 73–108; these read MSQQ…QRCP and PPPQ…SKQK. 2 stretches are compositionally biased toward pro residues: residues 14–24 and 73–100; these read QCCPPPQQRCP and PPPQ…PPPQ.

Functionally, positively regulates keratinocyte differentiation by inducing genes associated with epidermal differentiation. This chain is Small proline-rich protein 5, found in Homo sapiens (Human).